Reading from the N-terminus, the 536-residue chain is Berberine bridge enzyme-like 2 (536 aa).

An N-terminal signal peptide occupies residues 1–20 (MKIFCLILFLISSFISTSLA). Cysteine 35 and cysteine 98 are oxidised to a cystine. 6 N-linked (GlcNAc...) asparagine glycosylation sites follow: asparagine 38, asparagine 73, asparagine 136, asparagine 266, asparagine 334, and asparagine 352. An FAD-binding PCMH-type domain is found at 76–250 (ATPKPAIVIA…LAFKIKLVPV (175 aa)). Residues 113–175 (HDYEGVSYIS…KSHGFPAGVC (63 aa)) constitute a cross-link (6-(S-cysteinyl)-8alpha-(pros-histidyl)-FAD (His-Cys)).

Belongs to the oxygen-dependent FAD-linked oxidoreductase family. It depends on FAD as a cofactor. In terms of processing, the FAD cofactor is bound via a bicovalent 6-S-cysteinyl, 8alpha-N1-histidyl FAD linkage.

It is found in the secreted. It localises to the cell wall. The chain is Berberine bridge enzyme-like 2 from Arabidopsis thaliana (Mouse-ear cress).